A 605-amino-acid polypeptide reads, in one-letter code: UvrABC system protein C (605 aa).

The region spanning 14–92 (QSCGVYKMVG…IKSLKPLYNI (79 aa)) is the GIY-YIG domain. The UVR domain occupies 202–237 (KEVKEQLLFTMRKCSSEENYELAAIYRDRVKFLEQI).

It belongs to the UvrC family. As to quaternary structure, interacts with UvrB in an incision complex.

The protein localises to the cytoplasm. Its function is as follows. The UvrABC repair system catalyzes the recognition and processing of DNA lesions. UvrC both incises the 5' and 3' sides of the lesion. The N-terminal half is responsible for the 3' incision and the C-terminal half is responsible for the 5' incision. This chain is UvrABC system protein C, found in Wolbachia sp. subsp. Drosophila simulans (strain wRi).